Consider the following 340-residue polypeptide: Polyporopepsin (340 aa).

Residues 14-330 enclose the Peptidase A1 domain; sequence YVVNVGVGSP…DTTNKRLGLA (317 aa). Asp-32 is an active-site residue. The N-linked (GlcNAc...) asparagine glycan is linked to Asn-192. Residue Asp-212 is part of the active site. An N-linked (GlcNAc...) asparagine glycan is attached at Asn-238.

Belongs to the peptidase A1 family.

It carries out the reaction Milk clotting activity, broad specificity, but fails to cleave 15-Leu-|-Tyr-16 or 16-Tyr-|-Leu-17 of insulin B chain.. This Irpex lacteus (Milk-white toothed polypore) protein is Polyporopepsin.